The chain runs to 377 residues: F-box protein At4g00755 (377 aa).

In terms of domain architecture, F-box spans leucine 7–asparagine 47.

The protein is F-box protein At4g00755 of Arabidopsis thaliana (Mouse-ear cress).